The sequence spans 169 residues: Cell division inhibitor SulA (169 aa).

The interval 1–22 is disordered; the sequence is MHTSIYANRSTSFSPSAGNDTQ. Positions 106–112 are ftsZ binding; it reads ALRTGNY. Positions 162 to 169 are lon protease binding; the sequence is KIHSNLYH.

The protein belongs to the SulA family. As to quaternary structure, interacts with FtsZ. In terms of processing, is rapidly cleaved and degraded by the Lon protease once DNA damage is repaired.

In terms of biological role, component of the SOS system and an inhibitor of cell division. Accumulation of SulA causes rapid cessation of cell division and the appearance of long, non-septate filaments. In the presence of GTP, binds a polymerization-competent form of FtsZ in a 1:1 ratio, thus inhibiting FtsZ polymerization and therefore preventing it from participating in the assembly of the Z ring. This mechanism prevents the premature segregation of damaged DNA to daughter cells during cell division. This Enterobacter sp. (strain 638) protein is Cell division inhibitor SulA.